Here is a 518-residue protein sequence, read N- to C-terminus: Retinal dehydrogenase 2 (518 aa).

At Y168 the chain carries Phosphotyrosine. NAD(+) contacts are provided by residues 184 to 186 (IPW), 210 to 213 (KPAE), and 264 to 266 (STE). The Proton acceptor role is filled by E286. The active-site Nucleophile is the C320. At S351 the chain carries Phosphoserine. Residues 366-370 (KQYNK) and E417 contribute to the NAD(+) site.

Belongs to the aldehyde dehydrogenase family. As to quaternary structure, homotetramer.

It is found in the cytoplasm. It catalyses the reaction retinal + NAD(+) + H2O = retinoate + NADH + 2 H(+). The enzyme catalyses all-trans-retinal + NAD(+) + H2O = all-trans-retinoate + NADH + 2 H(+). The catalysed reaction is all-trans-13,14-dihydroretinal + NAD(+) + H2O = all-trans-13,14-dihydroretinoate + NADH + 2 H(+). It participates in cofactor metabolism; retinol metabolism. Functionally, catalyzes the NAD-dependent oxidation of aldehyde substrates, such as all-trans-retinal and all-trans-13,14-dihydroretinal, to their corresponding carboxylic acids, all-trans-retinoate and all-trans-13,14-dihydroretinoate, respectively. Retinoate signaling is critical for the transcriptional control of many genes, for instance it is crucial for initiation of meiosis in both male and female. Recognizes retinal as substrate, both in its free form and when bound to cellular retinol-binding protein. Lacks activity with benzaldehyde, acetaldehyde and octanal. Displays complete lack of activity with citral. The polypeptide is Retinal dehydrogenase 2 (Aldh1a2) (Mus musculus (Mouse)).